A 129-amino-acid polypeptide reads, in one-letter code: Phosphoribosyl-AMP cyclohydrolase (129 aa).

Asp77 provides a ligand contact to Mg(2+). Residue Cys78 participates in Zn(2+) binding. Mg(2+) contacts are provided by Asp79 and Asp81. Residues Cys94 and Cys101 each coordinate Zn(2+).

It belongs to the PRA-CH family. In terms of assembly, homodimer. It depends on Mg(2+) as a cofactor. The cofactor is Zn(2+).

It is found in the cytoplasm. The catalysed reaction is 1-(5-phospho-beta-D-ribosyl)-5'-AMP + H2O = 1-(5-phospho-beta-D-ribosyl)-5-[(5-phospho-beta-D-ribosylamino)methylideneamino]imidazole-4-carboxamide. It participates in amino-acid biosynthesis; L-histidine biosynthesis; L-histidine from 5-phospho-alpha-D-ribose 1-diphosphate: step 3/9. Catalyzes the hydrolysis of the adenine ring of phosphoribosyl-AMP. In Pelotomaculum thermopropionicum (strain DSM 13744 / JCM 10971 / SI), this protein is Phosphoribosyl-AMP cyclohydrolase.